The chain runs to 152 residues: MELNTLKPAKNSVKQNTRYGRGQGSGKGGTSTRGHKGAKSRSGYKSKPGFEGGQLPLQRRLPMYGFKNPNRVSYKPINLDTIQQLAEKAQLTVINPEVLHQHGLVSKRDKCKILGNGLLKTKLEVTAHAFSASASAAIEKLGGKANILNIYA.

The segment at 1–56 is disordered; it reads MELNTLKPAKNSVKQNTRYGRGQGSGKGGTSTRGHKGAKSRSGYKSKPGFEGGQLP. Over residues 21–31 the composition is skewed to gly residues; sequence RGQGSGKGGTS. A compositionally biased stretch (basic residues) spans 33-44; that stretch reads RGHKGAKSRSGY.

The protein belongs to the universal ribosomal protein uL15 family. As to quaternary structure, part of the 50S ribosomal subunit.

Functionally, binds to the 23S rRNA. The chain is Large ribosomal subunit protein uL15 from Amoebophilus asiaticus (strain 5a2).